Consider the following 482-residue polypeptide: Ubiquitin carboxyl-terminal hydrolase MINDY-1 (482 aa).

The interval 1 to 119 is disordered; the sequence is MEQPQAECPA…RPQQLPQSPR (119 aa). Over residues 21 to 66 the composition is skewed to basic and acidic residues; sequence ESEKHEALSGPEKHPQDKDGADAAPEKHPQDKDGADAHGEAGKQKS. Over residues 82–94 the composition is skewed to pro residues; the sequence is CPPPEASSSPPGP. Positions 106–119 are enriched in polar residues; sequence EACSRPQQLPQSPR. Ser-117 is modified (phosphoserine). The active-site Nucleophile is the Cys-151. His-333 functions as the Proton acceptor in the catalytic mechanism. The tract at residues 402 to 441 is ubiquitin-binding domain (UBD); the sequence is QVDQDYLIALSLQQQQQPQGMLGLSDLELAQQLQQEEYQQ. Over residues 437–446 the composition is skewed to low complexity; that stretch reads EEYQQQQAVQ. The tract at residues 437–482 is disordered; it reads EEYQQQQAVQPVRTRAPSSPGRGATSGRPAGERRQRSKTESDCVLL. Phosphoserine is present on Ser-454. Residues 466 to 482 show a composition bias toward basic and acidic residues; sequence AGERRQRSKTESDCVLL.

The protein belongs to the MINDY deubiquitinase family. FAM63 subfamily.

The catalysed reaction is Thiol-dependent hydrolysis of ester, thioester, amide, peptide and isopeptide bonds formed by the C-terminal Gly of ubiquitin (a 76-residue protein attached to proteins as an intracellular targeting signal).. Functionally, hydrolase that can specifically remove 'Lys-48'-linked conjugated ubiquitin from proteins. Has exodeubiquitinase activity and has a preference for long polyubiquitin chains. May play a regulatory role at the level of protein turnover. This chain is Ubiquitin carboxyl-terminal hydrolase MINDY-1 (Mindy1), found in Rattus norvegicus (Rat).